Reading from the N-terminus, the 500-residue chain is MKSSLVILYHREPYDEVRENGKTFYRDKTSPNGIMPTLKSFFANAEQSTWVAWKQISGKQQENFQAKMAFPGQENSVVHRIPLSADQVKNFYHITSKEAFWPILHSFPWQFTYDSSDWENFKQINEMFAEAACEDADDDALFWVHDYNLWLTPYFIRQKKPNAKIAFFHHTPFPSVDIFNILPWREAIVDSLLCCDLCGFHLPRYVQNFVAVARSLRKVEITRQVPVDEHAFTAVGTALAEPEITTQLKYKDHLVNLDAFPVGTNPTQIRAQVEKASTQERIRKIREELGSNKLILSAGRVDYVKGTKEMLVCYERLLERRPELQTKVNLVVAAAKAASGMRVYKNAQSEIERLVGRINGRFAKLNWTPILLFTSALSYEELLGFFGAADIAWITPLRDGLNLVAKEYVVAHGCDDGVLILSEFAGSAVELPDAILTNPYAAKRMDESIDQALAMPVEEQQRRMKSMYQAIQRYDVQQWANHMFREAKATAVLGKEPTPV.

Belongs to the glycosyltransferase 20 family.

It carries out the reaction ADP-alpha-D-glucose + sn-glycerol 3-phosphate = 2-O-(alpha-D-glucopyranosyl)-sn-glycerol 3-phosphate + ADP + H(+). Its pathway is glycan metabolism; glucosylglycerol biosynthesis. In terms of biological role, involved in salt tolerance by producing GG-phosphate from ADP-glucose and glycerol-3-phosphate (G3P), an intermediate in the synthesis of the osmolyte glucosylglycerol (GG). This chain is Glucosylglycerol-phosphate synthase (ggpS), found in Picosynechococcus sp. (strain ATCC 27264 / PCC 7002 / PR-6) (Agmenellum quadruplicatum).